We begin with the raw amino-acid sequence, 372 residues long: Methylthioribose-1-phosphate isomerase (372 aa).

Asp-252 acts as the Proton donor in catalysis.

Belongs to the eIF-2B alpha/beta/delta subunits family. MtnA subfamily.

Its subcellular location is the cytoplasm. It is found in the nucleus. The catalysed reaction is 5-(methylsulfanyl)-alpha-D-ribose 1-phosphate = 5-(methylsulfanyl)-D-ribulose 1-phosphate. The protein operates within amino-acid biosynthesis; L-methionine biosynthesis via salvage pathway; L-methionine from S-methyl-5-thio-alpha-D-ribose 1-phosphate: step 1/6. Functionally, catalyzes the interconversion of methylthioribose-1-phosphate (MTR-1-P) into methylthioribulose-1-phosphate (MTRu-1-P). The chain is Methylthioribose-1-phosphate isomerase from Yarrowia lipolytica (strain CLIB 122 / E 150) (Yeast).